A 283-amino-acid chain; its full sequence is 2-dehydro-3-deoxyphosphooctonate aldolase (283 aa).

This sequence belongs to the KdsA family.

Its subcellular location is the cytoplasm. It carries out the reaction D-arabinose 5-phosphate + phosphoenolpyruvate + H2O = 3-deoxy-alpha-D-manno-2-octulosonate-8-phosphate + phosphate. It functions in the pathway carbohydrate biosynthesis; 3-deoxy-D-manno-octulosonate biosynthesis; 3-deoxy-D-manno-octulosonate from D-ribulose 5-phosphate: step 2/3. It participates in bacterial outer membrane biogenesis; lipopolysaccharide biosynthesis. This is 2-dehydro-3-deoxyphosphooctonate aldolase from Parasynechococcus marenigrum (strain WH8102).